The chain runs to 352 residues: Quinolinate synthase (352 aa).

Iminosuccinate-binding residues include histidine 48 and serine 69. Residue cysteine 114 coordinates [4Fe-4S] cluster. Iminosuccinate-binding positions include 140–142 (YAN) and serine 157. Cysteine 201 provides a ligand contact to [4Fe-4S] cluster. Iminosuccinate-binding positions include 227 to 229 (HPE) and threonine 244. Position 298 (cysteine 298) interacts with [4Fe-4S] cluster.

It belongs to the quinolinate synthase family. Type 1 subfamily. [4Fe-4S] cluster is required as a cofactor.

The protein resides in the cytoplasm. The enzyme catalyses iminosuccinate + dihydroxyacetone phosphate = quinolinate + phosphate + 2 H2O + H(+). It participates in cofactor biosynthesis; NAD(+) biosynthesis; quinolinate from iminoaspartate: step 1/1. In terms of biological role, catalyzes the condensation of iminoaspartate with dihydroxyacetone phosphate to form quinolinate. In Ectopseudomonas mendocina (strain ymp) (Pseudomonas mendocina), this protein is Quinolinate synthase.